A 273-amino-acid polypeptide reads, in one-letter code: NADPH-dependent 7-cyano-7-deazaguanine reductase (273 aa).

Substrate is bound at residue 81–83 (VES). An NADPH-binding site is contributed by 83–84 (SK). C179 functions as the Thioimide intermediate in the catalytic mechanism. D186 acts as the Proton donor in catalysis. 218–219 (AE) contributes to the substrate binding site. Position 247 to 248 (247 to 248 (RG)) interacts with NADPH.

It belongs to the GTP cyclohydrolase I family. QueF type 2 subfamily. In terms of assembly, homodimer.

The protein resides in the cytoplasm. The catalysed reaction is 7-aminomethyl-7-carbaguanine + 2 NADP(+) = 7-cyano-7-deazaguanine + 2 NADPH + 3 H(+). It functions in the pathway tRNA modification; tRNA-queuosine biosynthesis. Its function is as follows. Catalyzes the NADPH-dependent reduction of 7-cyano-7-deazaguanine (preQ0) to 7-aminomethyl-7-deazaguanine (preQ1). The sequence is that of NADPH-dependent 7-cyano-7-deazaguanine reductase from Rickettsia canadensis (strain McKiel).